The sequence spans 330 residues: Methylthioribose-1-phosphate isomerase (330 aa).

Substrate is bound by residues 49-51 (RGA), Arg83, and Gln179. The Proton donor role is filled by Asp220. 230 to 231 (NK) lines the substrate pocket.

Belongs to the eIF-2B alpha/beta/delta subunits family. MtnA subfamily.

The enzyme catalyses 5-(methylsulfanyl)-alpha-D-ribose 1-phosphate = 5-(methylsulfanyl)-D-ribulose 1-phosphate. Its pathway is amino-acid biosynthesis; L-methionine biosynthesis via salvage pathway; L-methionine from S-methyl-5-thio-alpha-D-ribose 1-phosphate: step 1/6. In terms of biological role, catalyzes the interconversion of methylthioribose-1-phosphate (MTR-1-P) into methylthioribulose-1-phosphate (MTRu-1-P). This is Methylthioribose-1-phosphate isomerase from Thermus thermophilus (strain ATCC 27634 / DSM 579 / HB8).